The primary structure comprises 222 residues: Probable nicotinate-nucleotide adenylyltransferase (222 aa).

The protein belongs to the NadD family.

It catalyses the reaction nicotinate beta-D-ribonucleotide + ATP + H(+) = deamido-NAD(+) + diphosphate. It participates in cofactor biosynthesis; NAD(+) biosynthesis; deamido-NAD(+) from nicotinate D-ribonucleotide: step 1/1. Functionally, catalyzes the reversible adenylation of nicotinate mononucleotide (NaMN) to nicotinic acid adenine dinucleotide (NaAD). In Xylella fastidiosa (strain M12), this protein is Probable nicotinate-nucleotide adenylyltransferase.